A 396-amino-acid polypeptide reads, in one-letter code: Elongation factor Tu (396 aa).

In terms of domain architecture, tr-type G spans 10 to 206; the sequence is KPHCNIGTIG…AVDSYIPQPE (197 aa). The tract at residues 19–26 is G1; sequence GHVDHGKT. 19–26 is a binding site for GTP; sequence GHVDHGKT. T26 serves as a coordination point for Mg(2+). The tract at residues 60–64 is G2; the sequence is GITIS. A G3 region spans residues 81 to 84; sequence DCPG. GTP contacts are provided by residues 81 to 85 and 136 to 139; these read DCPGH and NKCD. The tract at residues 136-139 is G4; that stretch reads NKCD. The tract at residues 174-176 is G5; that stretch reads SAL.

Belongs to the TRAFAC class translation factor GTPase superfamily. Classic translation factor GTPase family. EF-Tu/EF-1A subfamily. As to quaternary structure, monomer.

It is found in the cytoplasm. It carries out the reaction GTP + H2O = GDP + phosphate + H(+). In terms of biological role, GTP hydrolase that promotes the GTP-dependent binding of aminoacyl-tRNA to the A-site of ribosomes during protein biosynthesis. This Rhodopseudomonas palustris (strain BisA53) protein is Elongation factor Tu.